A 451-amino-acid chain; its full sequence is Tubulin gamma-1 chain (451 aa).

A GTP-binding site is contributed by 142 to 148 (AGGTGSG).

This sequence belongs to the tubulin family.

The protein resides in the cytoplasm. The protein localises to the cytoskeleton. It localises to the microtubule organizing center. Its subcellular location is the centrosome. It is found in the spindle. Tubulin is the major constituent of microtubules. The gamma chain is found at microtubule organizing centers (MTOC) such as the spindle poles or the centrosome, suggesting that it is involved in the minus-end nucleation of microtubule assembly. The sequence is that of Tubulin gamma-1 chain (tubg1) from Xenopus laevis (African clawed frog).